Consider the following 103-residue polypeptide: Large ribosomal subunit protein eL30 (103 aa).

The protein belongs to the eukaryotic ribosomal protein eL30 family.

The polypeptide is Large ribosomal subunit protein eL30 (Methanothrix thermoacetophila (strain DSM 6194 / JCM 14653 / NBRC 101360 / PT) (Methanosaeta thermophila)).